The following is a 292-amino-acid chain: Ribosomal protein L11 methyltransferase (292 aa).

S-adenosyl-L-methionine is bound by residues Thr136, Gly159, Asp181, and Asn228.

It belongs to the methyltransferase superfamily. PrmA family.

The protein resides in the cytoplasm. It catalyses the reaction L-lysyl-[protein] + 3 S-adenosyl-L-methionine = N(6),N(6),N(6)-trimethyl-L-lysyl-[protein] + 3 S-adenosyl-L-homocysteine + 3 H(+). In terms of biological role, methylates ribosomal protein L11. This is Ribosomal protein L11 methyltransferase from Rhizobium etli (strain ATCC 51251 / DSM 11541 / JCM 21823 / NBRC 15573 / CFN 42).